Consider the following 100-residue polypeptide: A-type ATP synthase subunit F (100 aa).

This sequence belongs to the V-ATPase F subunit family. As to quaternary structure, has multiple subunits with at least A(3), B(3), C, D, E, F, H, I and proteolipid K(x).

It localises to the cell membrane. Functionally, component of the A-type ATP synthase that produces ATP from ADP in the presence of a proton gradient across the membrane. The sequence is that of A-type ATP synthase subunit F from Methanoregula boonei (strain DSM 21154 / JCM 14090 / 6A8).